The primary structure comprises 613 residues: Autophagy-related protein 22-2 (613 aa).

A disordered region spans residues 1 to 28; the sequence is MVLNSTPPASPGAEAQQRPPRYPGEDTA. Residues 41–61 traverse the membrane as a helical segment; it reads YGIAAEVFAVCGVGSFLPLTL. The segment covering 80–96 has biased composition (polar residues); that stretch reads GSSSPSTAPGNGTTTAT. Residues 80–99 are disordered; that stretch reads GSSSPSTAPGNGTTTATLRR. An N-linked (GlcNAc...) asparagine glycan is attached at N90. Transmembrane regions (helical) follow at residues 120-140, 155-177, and 189-209; these read SFAMYTFSLAVLVQALTLISF, LAFGFIGSMTSMLFIFIAPPVYI, and CLGSSFVVLNSFLPVLVANDP. The tract at residues 216 to 257 is disordered; sequence KEEGEELSPVNSSGEFARSEDLDEENVRDSDDHFTTGHGLKT. N226 carries N-linked (GlcNAc...) asparagine glycosylation. The span at 232-250 shows a compositional bias: basic and acidic residues; sequence ARSEDLDEENVRDSDDHFT. Helical transmembrane passes span 278-298, 307-327, 382-402, and 418-438; these read VGLGYCAAVLVQILSILMLFA, ISGTLPMRFVLLLVGIWWFSF, VIVFLIAWFLLSDAMATVSGT, and VGLLSITATLSGMAGAFLWPV. N-linked (GlcNAc...) asparagine glycosylation is present at N448. 4 consecutive transmembrane segments (helical) span residues 453–473, 488–510, 522–544, and 553–573; these read LCIALFEVIPLYGMLAYIPLF, FPLGIVHGLVSGGLSSYCRSFFG, YALYAATDKGSSFIGPAIVGMLI, and GFFFIAVLILLPIPLIWMVNA. Residues 592–613 are disordered; that stretch reads GEHASEYGGPSEEAEGLLARDI.

This sequence belongs to the ATG22 family.

It localises to the vacuole membrane. Its function is as follows. Vacuolar effluxer which mediate the efflux of amino acids resulting from autophagic degradation. The release of autophagic amino acids allows the maintenance of protein synthesis and viability during nitrogen starvation. This chain is Autophagy-related protein 22-2 (atg22-2), found in Neosartorya fischeri (strain ATCC 1020 / DSM 3700 / CBS 544.65 / FGSC A1164 / JCM 1740 / NRRL 181 / WB 181) (Aspergillus fischerianus).